Reading from the N-terminus, the 510-residue chain is ATP synthase subunit alpha (510 aa).

169–176 contacts ATP; the sequence is GDRQTGKT.

The protein belongs to the ATPase alpha/beta chains family. As to quaternary structure, F-type ATPases have 2 components, CF(1) - the catalytic core - and CF(0) - the membrane proton channel. CF(1) has five subunits: alpha(3), beta(3), gamma(1), delta(1), epsilon(1). CF(0) has three main subunits: a(1), b(2) and c(9-12). The alpha and beta chains form an alternating ring which encloses part of the gamma chain. CF(1) is attached to CF(0) by a central stalk formed by the gamma and epsilon chains, while a peripheral stalk is formed by the delta and b chains.

The protein localises to the cell inner membrane. The enzyme catalyses ATP + H2O + 4 H(+)(in) = ADP + phosphate + 5 H(+)(out). In terms of biological role, produces ATP from ADP in the presence of a proton gradient across the membrane. The alpha chain is a regulatory subunit. This is ATP synthase subunit alpha from Rickettsia peacockii (strain Rustic).